Reading from the N-terminus, the 1077-residue chain is Mitogen-activated protein kinase kinase kinase 9 (1077 aa).

The interval 1-40 (MESSRSLLGCLASATAAPPGDDATGAGAEEEEDEEEAAAE) is disordered. Low complexity predominate over residues 14–27 (ATAAPPGDDATGAG). A compositionally biased stretch (acidic residues) spans 28 to 38 (AEEEEDEEEAA). The 65-residue stretch at 45 to 109 (AALPYWTAVF…PSNYVTPRSA (65 aa)) folds into the SH3 domain. Positions 137–405 (LTLEEIIGIG…LTTIEESGFF (269 aa)) constitute a Protein kinase domain. ATP contacts are provided by residues 143–151 (IGIGGFGKV) and K164. D261 functions as the Proton acceptor in the catalytic mechanism. Phosphothreonine; by autocatalysis is present on residues T297 and T298. Phosphoserine; by autocatalysis is present on S301. Residue T305 is modified to Phosphothreonine; by autocatalysis. 2 leucine-zipper regions span residues 423-444 (IQEMFDQLRAKEKELRTWEEEL) and 458-479 (LRRREQELAEREIDILERELNI). The span at 491–503 (VKKRKGKFRKSRL) shows a compositional bias: basic residues. 6 disordered regions span residues 491 to 511 (VKKRKGKFRKSRLKLKDGNRI), 526 to 606 (SPTM…TSGD), 646 to 713 (EDED…KRGG), 748 to 790 (LPPE…KKEE), 860 to 971 (RDPN…PRPS), and 986 to 1011 (SHARSASPANSSSTETPSNLDSCFAS). Residue S526 is modified to Phosphoserine. Polar residues-rich tracts occupy residues 559–568 (PGESSKTWGR) and 693–709 (PVNSATSTPQLTPTNSL). Basic and acidic residues predominate over residues 755–767 (PPAREEKKRREGL). Residues 863 to 880 (NQSLTPTHVTLTAPTQPS) show a composition bias toward polar residues. The segment covering 901 to 915 (GSRSPSSNGMSPSPG) has biased composition (low complexity). The segment covering 987 to 1011 (HARSASPANSSSTETPSNLDSCFAS) has biased composition (polar residues).

The protein belongs to the protein kinase superfamily. STE Ser/Thr protein kinase family. MAP kinase kinase kinase subfamily. In terms of assembly, homodimer. Mg(2+) serves as cofactor. Post-translationally, autophosphorylation on serine and threonine residues within the activation loop plays a role in enzyme activation. Thr-305 is likely to be the main autophosphorylation site. Autophosphorylation also occurs on Thr-297 and Ser-301. Expressed in cochlea and utricle.

The catalysed reaction is L-seryl-[protein] + ATP = O-phospho-L-seryl-[protein] + ADP + H(+). It catalyses the reaction L-threonyl-[protein] + ATP = O-phospho-L-threonyl-[protein] + ADP + H(+). Its activity is regulated as follows. Homodimerization via the leucine zipper domains is required for autophosphorylation of multiple sites in the activation loop and subsequent activation. Autophosphorylation at Thr-305 is the key step in activation of MAP3K9/MLK1 and is required for full phosphorylation. Autophosphorylation at Thr-297 and Ser-301 have been shown to be of secondary importance in the activation of MAP3K9/MLK1. In terms of biological role, serine/threonine kinase which acts as an essential component of the MAP kinase signal transduction pathway. Plays an important role in the cascades of cellular responses evoked by changes in the environment. Once activated, acts as an upstream activator of the MKK/JNK signal transduction cascade through the phosphorylation of MAP2K4/MKK4 and MAP2K7/MKK7 which in turn activate the JNKs. The MKK/JNK signaling pathway regulates stress response via activator protein-1 (JUN) and GATA4 transcription factors. Also plays a role in mitochondrial death signaling pathway, including the release cytochrome c, leading to apoptosis. This is Mitogen-activated protein kinase kinase kinase 9 (Map3k9) from Mus musculus (Mouse).